The primary structure comprises 689 residues: DNA ligase (689 aa).

NAD(+) is bound by residues 40–44, 89–90, and E121; these read DSEYD and SL. Residue K123 is the N6-AMP-lysine intermediate of the active site. Residues R144, E179, K295, and K319 each coordinate NAD(+). Residues C413, C416, C431, and C437 each coordinate Zn(2+). The BRCT domain maps to 610–689; that stretch reads REQSSLTDKI…EEWLTLIKNV (80 aa).

It belongs to the NAD-dependent DNA ligase family. LigA subfamily. The cofactor is Mg(2+). It depends on Mn(2+) as a cofactor.

The enzyme catalyses NAD(+) + (deoxyribonucleotide)n-3'-hydroxyl + 5'-phospho-(deoxyribonucleotide)m = (deoxyribonucleotide)n+m + AMP + beta-nicotinamide D-nucleotide.. In terms of biological role, DNA ligase that catalyzes the formation of phosphodiester linkages between 5'-phosphoryl and 3'-hydroxyl groups in double-stranded DNA using NAD as a coenzyme and as the energy source for the reaction. It is essential for DNA replication and repair of damaged DNA. In Rickettsia africae (strain ESF-5), this protein is DNA ligase.